A 514-amino-acid polypeptide reads, in one-letter code: Peptide chain release factor 3 (514 aa).

The region spanning 8–268 (KKRRTFAIIS…TFLEFAPEPH (261 aa)) is the tr-type G domain. Residues 17-24 (SHPDAGKT), 85-89 (DTPGH), and 139-142 (NKLD) each bind GTP.

This sequence belongs to the TRAFAC class translation factor GTPase superfamily. Classic translation factor GTPase family. PrfC subfamily.

Its subcellular location is the cytoplasm. Functionally, increases the formation of ribosomal termination complexes and stimulates activities of RF-1 and RF-2. It binds guanine nucleotides and has strong preference for UGA stop codons. It may interact directly with the ribosome. The stimulation of RF-1 and RF-2 is significantly reduced by GTP and GDP, but not by GMP. The protein is Peptide chain release factor 3 of Streptococcus pyogenes serotype M49 (strain NZ131).